Reading from the N-terminus, the 485-residue chain is UDP-glycosyltransferase 91D1 (485 aa).

UDP-alpha-D-glucose is bound by residues serine 296, 355-356 (WA), 373-381 (HCGSGSIVE), and 395-398 (FCDQ).

This sequence belongs to the UDP-glycosyltransferase family.

May glycosylate diterpenes or flavonols in leaves. This chain is UDP-glycosyltransferase 91D1, found in Stevia rebaudiana (Stevia).